The primary structure comprises 254 residues: Aspartate/glutamate leucyltransferase (254 aa).

This sequence belongs to the R-transferase family. Bpt subfamily.

The protein resides in the cytoplasm. The enzyme catalyses N-terminal L-glutamyl-[protein] + L-leucyl-tRNA(Leu) = N-terminal L-leucyl-L-glutamyl-[protein] + tRNA(Leu) + H(+). It catalyses the reaction N-terminal L-aspartyl-[protein] + L-leucyl-tRNA(Leu) = N-terminal L-leucyl-L-aspartyl-[protein] + tRNA(Leu) + H(+). Its function is as follows. Functions in the N-end rule pathway of protein degradation where it conjugates Leu from its aminoacyl-tRNA to the N-termini of proteins containing an N-terminal aspartate or glutamate. The protein is Aspartate/glutamate leucyltransferase of Maricaulis maris (strain MCS10) (Caulobacter maris).